The sequence spans 734 residues: Origin of replication complex subunit 3 (734 aa).

2 disordered regions span residues M1 to A25 and G532 to K554. The span at Q12–T24 shows a compositional bias: polar residues.

It belongs to the ORC3 family. In terms of assembly, component of the origin recognition complex (ORC) composed of at least ORC1 (ORC1A or ORC1B), ORC2, ORC3, ORC4, ORC5 and ORC6. ORC is regulated in a cell-cycle and development dependent manner. It is sequentially assembled at the exit from anaphase of mitosis and disassembled as cells enter S phase. Interacts directly with ORC1A, ORC2, ORC4, ORC5 and ORC6. Follow a cell-cycle regulation with a peak at the G1/S-phase. Mostly expressed in siliques and flowers, and, to a lower exent, in flower buds, leaves, roots and stems.

Its subcellular location is the nucleus. Component of the origin recognition complex (ORC) that binds origins of replication. DNA-binding is ATP-dependent. The specific DNA sequences that define origins of replication have not been identified yet. This is Origin of replication complex subunit 3 from Arabidopsis thaliana (Mouse-ear cress).